Consider the following 23-residue polypeptide: Mu-conotoxin-like SxIIIB (23 aa).

Gln1 bears the Pyrrolidone carboxylic acid mark. 3 disulfide bridges follow: Cys3–Cys16, Cys4–Cys21, and Cys11–Cys22. Residue Ala23 is modified to Alanine amide.

Belongs to the conotoxin M superfamily. Expressed by the venom duct.

The protein resides in the secreted. In terms of biological role, mu-conotoxins block voltage-gated sodium channels (Nav). The chain is Mu-conotoxin-like SxIIIB from Conus striolatus (Cone snail).